The chain runs to 197 residues: Adenylate kinase (197 aa).

19-24 (GSGKGT) contacts ATP. Residues 39 to 68 (SSGDLLRAEVQSGSPKGKELKAMMERGELV) are NMP. AMP-binding positions include serine 40, arginine 45, 66–68 (ELV), 95–98 (RYPR), and glutamine 102. Residues 132-142 (KRAETSNRVDD) are LID. Arginine 133 contacts ATP. Residues arginine 139 and arginine 150 each coordinate AMP. ATP is bound at residue glycine 178.

This sequence belongs to the adenylate kinase family. In terms of assembly, monomer.

The protein resides in the cytoplasm. It carries out the reaction AMP + ATP = 2 ADP. Its function is as follows. Catalyzes the reversible transfer of the terminal phosphate group between ATP and AMP. Plays an important role in cellular energy homeostasis and in adenine nucleotide metabolism. This Schistosoma mansoni (Blood fluke) protein is Adenylate kinase.